Here is a 396-residue protein sequence, read N- to C-terminus: MTATVLLEVPFSARGDRIPDAVAELRTREPIRKVRTITGAEAWLVSSYALCTQVLEDRRFSMKETAAAGAPRLNALTVPPEVVNNMGNIADAGLRKAVMKAITPKAPGLEQFLRDTANSLLDNLITEGAPADLRNDFADPLATALHCKVLGIPQEDGPKLFRSLSIAFMSSADPIPAAKINWDRDIEYMAGILENPNITTGLMGELSRLRKDPAYSHVSDELFATIGVTFFGAGVISTGSFLTTALISLIQRPQLRNLLHEKPELIPAGVEELLRINLSFADGLPRLATADIQVGDVLVRKGELVLVLLEGANFDPEHFPNPGSIELDRPNPTSHLAFGRGQHFCPGSALGRRHAQIGIEALLKKMPGVDLAVPIDQLVWRTRFQRRIPERLPVLW.

Residue cysteine 345 participates in heme binding.

This sequence belongs to the cytochrome P450 family. Heme serves as cofactor.

The protein resides in the cytoplasm. The polypeptide is Cytochrome P450 121 (cyp121) (Mycobacterium bovis (strain ATCC BAA-935 / AF2122/97)).